Consider the following 72-residue polypeptide: UPF0154 protein BPUM_1692 (72 aa).

The helical transmembrane segment at 4–24 (WVVILVGVVALLAGVALGFFI) threads the bilayer.

This sequence belongs to the UPF0154 family.

It is found in the cell membrane. The polypeptide is UPF0154 protein BPUM_1692 (Bacillus pumilus (strain SAFR-032)).